A 132-amino-acid polypeptide reads, in one-letter code: Small ribosomal subunit protein uS8 (132 aa).

The protein belongs to the universal ribosomal protein uS8 family. In terms of assembly, part of the 30S ribosomal subunit. Contacts proteins S5 and S12.

In terms of biological role, one of the primary rRNA binding proteins, it binds directly to 16S rRNA central domain where it helps coordinate assembly of the platform of the 30S subunit. This Limosilactobacillus fermentum (strain NBRC 3956 / LMG 18251) (Lactobacillus fermentum) protein is Small ribosomal subunit protein uS8.